The sequence spans 617 residues: Chaperone protein HscA homolog (617 aa).

The protein belongs to the heat shock protein 70 family.

Chaperone involved in the maturation of iron-sulfur cluster-containing proteins. Has a low intrinsic ATPase activity which is markedly stimulated by HscB. This is Chaperone protein HscA homolog from Vibrio campbellii (strain ATCC BAA-1116).